The primary structure comprises 310 residues: Iron ABC transporter substrate-binding lipoprotein MtsA (310 aa).

Residues 1 to 20 (MGKKMSLILGAFLSVFLLVA) form the signal peptide. Cysteine 21 carries N-palmitoyl cysteine lipidation. Residue cysteine 21 is the site of S-diacylglycerol cysteine attachment. Positions 68, 140, 206, and 281 each coordinate Fe(2+).

Belongs to the bacterial solute-binding protein 9 family. Lipoprotein receptor antigen (Lrai) subfamily.

The protein localises to the cell membrane. In terms of biological role, part of the ATP-binding cassette (ABC) transport system MtsABC involved in iron import. Binds iron with high affinity and specificity and delivers it to the membrane permease for translocation into the cytoplasm. Has low affinity for Zn(2+) and Cu(2+). This is Iron ABC transporter substrate-binding lipoprotein MtsA (mtsA) from Streptococcus pyogenes serotype M6 (strain ATCC BAA-946 / MGAS10394).